We begin with the raw amino-acid sequence, 259 residues long: Aspartate/glutamate leucyltransferase (259 aa).

It belongs to the R-transferase family. Bpt subfamily.

It localises to the cytoplasm. It catalyses the reaction N-terminal L-glutamyl-[protein] + L-leucyl-tRNA(Leu) = N-terminal L-leucyl-L-glutamyl-[protein] + tRNA(Leu) + H(+). It carries out the reaction N-terminal L-aspartyl-[protein] + L-leucyl-tRNA(Leu) = N-terminal L-leucyl-L-aspartyl-[protein] + tRNA(Leu) + H(+). Its function is as follows. Functions in the N-end rule pathway of protein degradation where it conjugates Leu from its aminoacyl-tRNA to the N-termini of proteins containing an N-terminal aspartate or glutamate. In Sinorhizobium medicae (strain WSM419) (Ensifer medicae), this protein is Aspartate/glutamate leucyltransferase.